We begin with the raw amino-acid sequence, 241 residues long: MAPTLSADPADRIIVALDGMAPDQALRFAAHVDGLRWVKVGLELFVQAGPEVVAQLREQGLRVFLDLKFHDIPATMAGACRRAAALGAELITVHACAGSEALKAVKVAAEEGAQAAGQPAPTLLAVTVLTSWEEQRLQRELAIAQGIAERVPALAQLSATAGIGGCVCSPLEAAALRAQHPQPFALVTPGIRPRGAAVGDQARVMGPAEAIAAGASQLVIGRPISKAEDPSAAFAACCGDL.

Substrate contacts are provided by residues Asp-18, Lys-39, Asp-66–Thr-75, Thr-130, Arg-192, Gln-201, Gly-221, and Arg-222. Lys-68 functions as the Proton donor in the catalytic mechanism.

This sequence belongs to the OMP decarboxylase family. Type 1 subfamily. In terms of assembly, homodimer.

The catalysed reaction is orotidine 5'-phosphate + H(+) = UMP + CO2. Its pathway is pyrimidine metabolism; UMP biosynthesis via de novo pathway; UMP from orotate: step 2/2. Its function is as follows. Catalyzes the decarboxylation of orotidine 5'-monophosphate (OMP) to uridine 5'-monophosphate (UMP). This Synechococcus sp. (strain CC9605) protein is Orotidine 5'-phosphate decarboxylase.